A 168-amino-acid polypeptide reads, in one-letter code: GTP-dependent dephospho-CoA kinase (168 aa).

6 residues coordinate GTP: Asp-49, Val-50, Val-51, Asp-68, Lys-70, and Glu-120.

This sequence belongs to the GTP-dependent DPCK family.

It catalyses the reaction 3'-dephospho-CoA + GTP = GDP + CoA + H(+). It functions in the pathway cofactor biosynthesis; coenzyme A biosynthesis. In terms of biological role, catalyzes the GTP-dependent phosphorylation of the 3'-hydroxyl group of dephosphocoenzyme A to form coenzyme A (CoA). The chain is GTP-dependent dephospho-CoA kinase from Pyrobaculum neutrophilum (strain DSM 2338 / JCM 9278 / NBRC 100436 / V24Sta) (Thermoproteus neutrophilus).